The following is a 572-amino-acid chain: Putative lysozyme-like protein (572 aa).

The first 17 residues, 1–17 (MRLLLVLLALIFSVVSA), serve as a signal peptide directing secretion. Low complexity predominate over residues 145 to 165 (MSSSGSSSSSGSSGSSSSSSG). Disordered regions lie at residues 145–199 (MSSS…HGGG), 231–297 (SSSS…GGGV), 326–388 (ANSV…GERK), and 433–469 (AGSSSSSGSSGSSSSSSSSGSSGGSSGGSSGGGGGSG). The span at 166 to 185 (SSGGGSSGGGSGGGGGGSGL) shows a compositional bias: gly residues. Positions 231–240 (SSSSADAGSS) are enriched in low complexity. A compositionally biased stretch (gly residues) spans 258–282 (STGGTGGSSGSSGGGSGGGGGGSGL). Over residues 326–358 (ANSVSSLAGSMSSSGSSSSSGSSGSSSSSSSSG) the composition is skewed to low complexity. Residues 359-382 (SSGGSSGGGSSGGGSGGGGGGSGL) are compositionally biased toward gly residues. The segment covering 433–452 (AGSSSSSGSSGSSSSSSSSG) has biased composition (low complexity). Positions 453–469 (SSGGSSGGSSGGGGGSG) are enriched in gly residues.

The protein belongs to the dictyostelium lysozyme family.

The protein is Putative lysozyme-like protein (alyL) of Dictyostelium discoideum (Social amoeba).